The sequence spans 519 residues: Importin subunit alpha-9 (519 aa).

Positions 1–29 (MADDGSASNRRDPIKSSVGNVAGQRRRKQ) are disordered. ARM repeat units follow at residues 116 to 156 (FPPV…NIAA), 158 to 197 (KPEE…NVAG), 200 to 239 (EDLR…NLIK), 244 to 283 (KAAA…YLSA), 286 to 326 (DIAT…NFVA), 335 to 374 (ILIR…NIAA), 377 to 416 (IEHK…NLCV), and 429 to 468 (QEHL…LVLR).

It belongs to the importin alpha family. In terms of assembly, forms a complex with importin subunit beta-1.

Its subcellular location is the nucleus envelope. In terms of biological role, binds to conventional NLS motifs and mediates nuclear protein import across the nuclear envelope. Acts as a cellular receptor for the nuclear import of the virD2 protein of Agrobacterium, but is not essential for Agrobacterium-mediated root transformation. This is Importin subunit alpha-9 from Arabidopsis thaliana (Mouse-ear cress).